Reading from the N-terminus, the 125-residue chain is uncharacterized protein (125 aa).

The next 2 helical transmembrane spans lie at 22-44 (TPLM…NAAV) and 54-73 (YMGI…SVLM).

Belongs to the bacteriophage holin family. Cp-1 holin subfamily.

It is found in the cell membrane. This is an uncharacterized protein from Clostridium acetobutylicum (strain ATCC 824 / DSM 792 / JCM 1419 / IAM 19013 / LMG 5710 / NBRC 13948 / NRRL B-527 / VKM B-1787 / 2291 / W).